The following is a 445-amino-acid chain: Methyl-CpG-binding domain protein 4-like protein (445 aa).

D429 is an active-site residue.

As to expression, isoform 1 and isoform 4: Expressed in leaves and flowers, but not in roots or stems.

The protein resides in the nucleus. In terms of biological role, monofunctional DNA glycosylase targeting U:G and T:G mispairs. Excises uracil derivatives and exhibits a preference for a CpG sequence context, irrespective of the methylation status of the complementary strand. The activity follows a biphasic kinetics, with an initial burst of product accumulation followed by a slower phase. Specifically binds its reaction product. Triggers the base excision repair (BER) pathway. The polypeptide is Methyl-CpG-binding domain protein 4-like protein (Arabidopsis thaliana (Mouse-ear cress)).